The following is a 516-amino-acid chain: BAR/IMD domain-containing adapter protein 2-like 2 (516 aa).

The IMD domain maps to 1 to 227; that stretch reads MSGVNSDLLH…PTPLDQEAQL (227 aa). A disordered region spans residues 200-273; it reads ADGWKEKVSE…SSSVGESLGL (74 aa). Residues 201-212 show a composition bias toward basic and acidic residues; it reads DGWKEKVSESRS. Over residues 226-236 the composition is skewed to polar residues; it reads QLKSSVGSLLQ. Basic and acidic residues predominate over residues 238-247; that stretch reads GDREMDREPL. Residues 249–270 are compositionally biased toward low complexity; sequence RVPSRAPSPLPSRSRSSSVGES. Residues 274–337 form the SH3 domain; sequence GGGRSMRAIV…PAAYVASTED (64 aa). Positions 355 to 376 are enriched in polar residues; that stretch reads LLEPTSQSESDTQTYSEVSSPV. The tract at residues 355–516 is disordered; sequence LLEPTSQSES…TNDRSAPRIQ (162 aa). Over residues 434–450 the composition is skewed to basic and acidic residues; that stretch reads PDRRAESHFESKVELKN. Pro residues predominate over residues 454–465; that stretch reads LPPPAPPLPNSP.

The protein resides in the cell membrane. Functionally, phosphoinositides-binding protein that induces the formation of planar or gently curved membrane structures. The protein is BAR/IMD domain-containing adapter protein 2-like 2 (baiap2l2) of Danio rerio (Zebrafish).